The sequence spans 473 residues: Trehalose-6-phosphate synthase (473 aa).

Arg10 contributes to the D-glucose 6-phosphate binding site. 21 to 22 (GG) serves as a coordination point for UDP-alpha-D-glucose. Residues Tyr76 and Asp130 each coordinate D-glucose 6-phosphate. UDP-alpha-D-glucose contacts are provided by Arg262 and Lys267. Residue Arg300 participates in D-glucose 6-phosphate binding. UDP-alpha-D-glucose-binding positions include Phe339 and 365–369 (LVAKE). Residues 454–473 (TPRSPERQQQNNVATFPKLA) form a disordered region.

The protein belongs to the glycosyltransferase 20 family. Homotetramer.

The enzyme catalyses D-glucose 6-phosphate + UDP-alpha-D-glucose = alpha,alpha-trehalose 6-phosphate + UDP + H(+). Its pathway is glycan biosynthesis; trehalose biosynthesis. In terms of biological role, probably involved in the osmoprotection via the biosynthesis of trehalose. Catalyzes the transfer of glucose from UDP-alpha-D-glucose (UDP-Glc) to D-glucose 6-phosphate (Glc-6-P) to form trehalose-6-phosphate. Acts with retention of the anomeric configuration of the UDP-sugar donor. This Salmonella paratyphi A (strain ATCC 9150 / SARB42) protein is Trehalose-6-phosphate synthase.